The sequence spans 256 residues: Thiazole synthase (256 aa).

The active-site Schiff-base intermediate with DXP is lysine 95. 1-deoxy-D-xylulose 5-phosphate contacts are provided by residues glycine 156, 182 to 183, and 204 to 205; these read AG and NT.

The protein belongs to the ThiG family. As to quaternary structure, homotetramer. Forms heterodimers with either ThiH or ThiS.

Its subcellular location is the cytoplasm. The catalysed reaction is [ThiS sulfur-carrier protein]-C-terminal-Gly-aminoethanethioate + 2-iminoacetate + 1-deoxy-D-xylulose 5-phosphate = [ThiS sulfur-carrier protein]-C-terminal Gly-Gly + 2-[(2R,5Z)-2-carboxy-4-methylthiazol-5(2H)-ylidene]ethyl phosphate + 2 H2O + H(+). It functions in the pathway cofactor biosynthesis; thiamine diphosphate biosynthesis. Functionally, catalyzes the rearrangement of 1-deoxy-D-xylulose 5-phosphate (DXP) to produce the thiazole phosphate moiety of thiamine. Sulfur is provided by the thiocarboxylate moiety of the carrier protein ThiS. In vitro, sulfur can be provided by H(2)S. The polypeptide is Thiazole synthase (Escherichia fergusonii (strain ATCC 35469 / DSM 13698 / CCUG 18766 / IAM 14443 / JCM 21226 / LMG 7866 / NBRC 102419 / NCTC 12128 / CDC 0568-73)).